The following is a 342-amino-acid chain: Anthranilate phosphoribosyltransferase (342 aa).

5-phospho-alpha-D-ribose 1-diphosphate is bound by residues Gly83, 86–87, Thr91, 93–96, 111–119, and Ala123; these read GD, NIST, and KHGGRSVSS. Gly83 is a binding site for anthranilate. Ser95 is a Mg(2+) binding site. Arg169 provides a ligand contact to anthranilate. Mg(2+) contacts are provided by Asp228 and Glu229.

This sequence belongs to the anthranilate phosphoribosyltransferase family. In terms of assembly, homodimer. Mg(2+) serves as cofactor.

It carries out the reaction N-(5-phospho-beta-D-ribosyl)anthranilate + diphosphate = 5-phospho-alpha-D-ribose 1-diphosphate + anthranilate. The protein operates within amino-acid biosynthesis; L-tryptophan biosynthesis; L-tryptophan from chorismate: step 2/5. Functionally, catalyzes the transfer of the phosphoribosyl group of 5-phosphorylribose-1-pyrophosphate (PRPP) to anthranilate to yield N-(5'-phosphoribosyl)-anthranilate (PRA). This chain is Anthranilate phosphoribosyltransferase, found in Neisseria gonorrhoeae (strain ATCC 700825 / FA 1090).